We begin with the raw amino-acid sequence, 310 residues long: MAKIVVALGGNALGKSPQEQLELVKNTAKSLVGLITKGHEIVISHGNGPQVGSINLGLNYAAEHNQGPAFPFAECGAMSQAYIGYQLQESLQNELHSIGMDKQVVTLVTQVEVDENDPAFNNPSKPIGLFYNKEEAEQIQKEKGFIFVEDAGRGYRRVVPSPQPISIIELESIKTLIKNDTLVIAAGGGGIPVIREQHDGFKGIDAVIDKDKTSALLGANIQCDQLIILTAIDYVYINFNTENQQPLKTTNVDELKRYIDENQFAKGSMLPKIEAAISFIENNPKGSVLITSLNELDAALEGKVGTVIKK.

The protein belongs to the carbamate kinase family.

It is found in the cytoplasm. The catalysed reaction is hydrogencarbonate + NH4(+) + ATP = carbamoyl phosphate + ADP + H2O + H(+). The protein operates within metabolic intermediate metabolism; carbamoyl phosphate degradation; CO(2) and NH(3) from carbamoyl phosphate: step 1/1. The polypeptide is Carbamate kinase 1 (arcC1) (Staphylococcus aureus (strain COL)).